The sequence spans 453 residues: Secreted triacylglycerol lipase LIP2 (453 aa).

The N-terminal stretch at 1-19 is a signal peptide; it reads MKLSLVVLTLISVAAQALA. N98 carries an N-linked (GlcNAc...) asparagine glycan. A disulfide bond links C115 and C284. S197 serves as the catalytic Nucleophile. N230 carries an N-linked (GlcNAc...) asparagine glycan. Catalysis depends on residues D344 and H378. A disulfide bridge links C360 with C406.

This sequence belongs to the AB hydrolase superfamily. Lipase family. Class Lip subfamily.

The protein resides in the secreted. The enzyme catalyses a triacylglycerol + H2O = a diacylglycerol + a fatty acid + H(+). It carries out the reaction a monoacylglycerol + H2O = glycerol + a fatty acid + H(+). It catalyses the reaction a diacylglycerol + H2O = a monoacylglycerol + a fatty acid + H(+). The activity is significantly increased in the presence of Triton X-100 and partially inhibited by PMSF but unaffected by univalent and divalent metal ions. Activity is significantly decreased in acetate buffer compared to that in citrate buffer at the same pH. In terms of biological role, major secreted lipase involved in Dandruff and seborrheic dermatitis (D/SD) probably via lipase-mediated breakdown of sebaceous lipids and release of irritating free fatty acids. Has triacylglycerol lipase activity and is able to hydrolyze triolein, tristearin, trilinolein, tripalmitoylglycerol and trihexadecenoin. Hydrolyze diacylglycerols such as distearin, dilinolein, dipalmitoylglycerol and dipalmitolein. Shows high esterase activity against 4-nitrophenyl palmitate and 1-naphthyl palmitate but not 1-naphthyl acetate, suggesting that it specifically recognizes fatty acids. Mostly converts monoolein to di- and triolein, while free fatty acids are only produced in low amounts. In Malassezia globosa (strain ATCC MYA-4612 / CBS 7966) (Dandruff-associated fungus), this protein is Secreted triacylglycerol lipase LIP2.